A 2495-amino-acid chain; its full sequence is Non-reducing polyketide synthase adrD (2495 aa).

The N-terminal acylcarrier protein transacylase domain (SAT) stretch occupies residues 14–252 (VVFGPQSSEI…HHSRHVTAVQ (239 aa)). Residues 386–807 (VIPIAITGMG…GSNAALVVKQ (422 aa)) form the Ketosynthase family 3 (KS3) domain. Active-site for beta-ketoacyl synthase activity residues include Cys-551, His-686, and His-725. The interval 913-1222 (LCFGGQNGNE…QALDLGGALA (310 aa)) is malonyl-CoA:ACP transacylase (MAT) domain. Ser-1000 serves as the catalytic For acyl/malonyl transferase activity. The tract at residues 1294–1422 (KEFVQLLTKQ…GEISLHPFGQ (129 aa)) is N-terminal hotdog fold. Positions 1294–1601 (KEFVQLLTKQ…FTSVSIAGLS (308 aa)) constitute a PKS/mFAS DH domain. The tract at residues 1295-1600 (EFVQLLTKQP…TFTSVSIAGL (306 aa)) is product template (PT) domain. The active-site Proton acceptor; for dehydratase activity is the His-1325. The C-terminal hotdog fold stretch occupies residues 1450–1601 (ESSGLKGFAV…FTSVSIAGLS (152 aa)). The active-site Proton donor; for dehydratase activity is the Asp-1508. Positions 1651–1725 (SGHFMVVQEM…TLVQTIFPDA (75 aa)) constitute a Carrier domain. An O-(pantetheine 4'-phosphoryl)serine modification is found at Ser-1685. The segment at 1887–2120 (QHTSEHNLLR…GFQWVDWTYN (234 aa)) is methyltransferase (CMeT) domain. The thioesterase (TE) domain stretch occupies residues 2150–2495 (YLMNEETIVY…YEFLRDHVRY (346 aa)). Catalysis depends on for thioesterase activity residues Ser-2273 and Asp-2432.

The enzyme catalyses 3 malonyl-CoA + acetyl-CoA + 2 S-adenosyl-L-methionine = 3,5-dimethylorsellinate + 2 S-adenosyl-L-homocysteine + 3 CO2 + 4 CoA. The protein operates within secondary metabolite biosynthesis; terpenoid biosynthesis. Non-reducing polyketide synthase; part of the gene cluster that mediates the biosynthesis of andrastins, meroterpenoid compounds that exhibit inhibitory activity against ras farnesyltransferase, suggesting that they could be promising leads for antitumor agents. The first step of the pathway is the synthesis of 3,5-dimethylorsellinic acid (DMOA) by the polyketide synthase adrD via condensation of one acetyl-CoA starter unit with 3 malonyl-CoA units and 2 methylations. DMAO is then converted to farnesyl-DMAO by the prenyltransferase adrG. The methyltransferase adrK catalyzes the methylation of the carboxyl group of farnesyl-DMAO to farnesyl-DMAO methyl ester which is further converted to epoxyfarnesyl-DMAO methyl ester by the FAD-dependent monooxygenase adrH. The terpene cyclase adrI then catalyzes the carbon skeletal rearrangement to generate the andrastin E, the first compound in the pathway having the andrastin scaffold, with the tetracyclic ring system. The post-cyclization tailoring enzymes adrF, adrE, adrJ, and adrA, are involved in the conversion of andrastin E into andrastin A. The short chain dehydrogenase adrF is responsible for the oxidation of the C-3 a hydroxyl group of andrastin E to yield the corresponding ketone, andrastin D. The ketoreductase adrE stereoselectively reduces the carbonyl moiety to reverse the stereochemistry of the C-3 position to yield andrastin F. The acetyltransferase adrJ is the acetyltransferase that attaches the acetyl group to the C-3 hydroxyl group of andrastin F to yield andrastin C. Finally, the cytochrome P450 monooxygenase adrA catalyzes two sequential oxidation reactions of the C-23 methyl group, to generate the corresponding alcohol andrastin B, and aldehyde andrastin A. In Penicillium roqueforti, this protein is Non-reducing polyketide synthase adrD.